The chain runs to 182 residues: Oligoribonuclease (182 aa).

The 164-residue stretch at 7–170 (LIWIDLEMTG…EDIRESVEEL (164 aa)) folds into the Exonuclease domain. The active site involves Y128.

Belongs to the oligoribonuclease family.

Its subcellular location is the cytoplasm. 3'-to-5' exoribonuclease specific for small oligoribonucleotides. This is Oligoribonuclease from Hahella chejuensis (strain KCTC 2396).